The chain runs to 142 residues: ATP synthase epsilon chain (142 aa).

Belongs to the ATPase epsilon chain family. F-type ATPases have 2 components, CF(1) - the catalytic core - and CF(0) - the membrane proton channel. CF(1) has five subunits: alpha(3), beta(3), gamma(1), delta(1), epsilon(1). CF(0) has three main subunits: a, b and c.

Its subcellular location is the cell inner membrane. Produces ATP from ADP in the presence of a proton gradient across the membrane. This chain is ATP synthase epsilon chain, found in Maridesulfovibrio salexigens (strain ATCC 14822 / DSM 2638 / NCIMB 8403 / VKM B-1763) (Desulfovibrio salexigens).